The primary structure comprises 65 residues: uncharacterized protein (65 aa).

Cys9 functions as the Nucleophile in the catalytic mechanism. The active site involves Arg15.

The protein belongs to the low molecular weight phosphotyrosine protein phosphatase family.

This is an uncharacterized protein from Synechococcus sp. (strain WH8020).